A 372-amino-acid polypeptide reads, in one-letter code: UDP-N-acetylglucosamine--N-acetylmuramyl-(pentapeptide) pyrophosphoryl-undecaprenol N-acetylglucosamine transferase (372 aa).

Residues 10–12 (TGG), Asn-124, Arg-166, Ser-196, Ile-256, and Gln-301 contribute to the UDP-N-acetyl-alpha-D-glucosamine site.

This sequence belongs to the glycosyltransferase 28 family. MurG subfamily.

It localises to the cell membrane. The enzyme catalyses di-trans,octa-cis-undecaprenyl diphospho-N-acetyl-alpha-D-muramoyl-L-alanyl-D-glutamyl-meso-2,6-diaminopimeloyl-D-alanyl-D-alanine + UDP-N-acetyl-alpha-D-glucosamine = di-trans,octa-cis-undecaprenyl diphospho-[N-acetyl-alpha-D-glucosaminyl-(1-&gt;4)]-N-acetyl-alpha-D-muramoyl-L-alanyl-D-glutamyl-meso-2,6-diaminopimeloyl-D-alanyl-D-alanine + UDP + H(+). It participates in cell wall biogenesis; peptidoglycan biosynthesis. In terms of biological role, cell wall formation. Catalyzes the transfer of a GlcNAc subunit on undecaprenyl-pyrophosphoryl-MurNAc-pentapeptide (lipid intermediate I) to form undecaprenyl-pyrophosphoryl-MurNAc-(pentapeptide)GlcNAc (lipid intermediate II). The chain is UDP-N-acetylglucosamine--N-acetylmuramyl-(pentapeptide) pyrophosphoryl-undecaprenol N-acetylglucosamine transferase from Desulforamulus reducens (strain ATCC BAA-1160 / DSM 100696 / MI-1) (Desulfotomaculum reducens).